The following is a 557-amino-acid chain: Urocanate hydratase (557 aa).

The tract at residues 1–20 is disordered; the sequence is MSNPRHNEREVRSPRGDELN. NAD(+) contacts are provided by residues 52-53, Gln-130, 176-178, Glu-196, Arg-201, 242-243, 263-267, 273-274, and Tyr-322; these read GG, GMG, NA, QTSAH, and YL. Cys-410 is a catalytic residue. Position 492 (Gly-492) interacts with NAD(+).

Belongs to the urocanase family. NAD(+) is required as a cofactor.

The protein resides in the cytoplasm. The catalysed reaction is 4-imidazolone-5-propanoate = trans-urocanate + H2O. The protein operates within amino-acid degradation; L-histidine degradation into L-glutamate; N-formimidoyl-L-glutamate from L-histidine: step 2/3. Functionally, catalyzes the conversion of urocanate to 4-imidazolone-5-propionate. This Brucella suis (strain ATCC 23445 / NCTC 10510) protein is Urocanate hydratase.